A 1259-amino-acid chain; its full sequence is Translocation and assembly module subunit TamB (1259 aa).

M1 bears the N-formylmethionine mark. Residues 1 to 6 (MSLWKK) lie on the Cytoplasmic side of the membrane. A helical; Signal-anchor for type II membrane protein transmembrane segment spans residues 7–27 (ISLGVVIVILLLLGSVAFLVG). At 28-1259 (TTSGLHLVFK…ALDLLYQFEF (1232 aa)) the chain is on the periplasmic side.

It belongs to the TamB family. In terms of assembly, interacts with TamA to form the translocation and assembly module (TAM).

It localises to the cell inner membrane. Functionally, component of the translocation and assembly module (TAM), which facilitates the insertion and assembly of specific beta-barrel proteins into the outer membrane. Promotes the assembly and secretion across the outer membrane of a subset of autotransporters, such as Ag43. Involved in the assembly of the outer membrane usher protein FimD. In vitro, when TAM is reconstituted into preformed liposomes, it can promote the assembly of several outer membrane proteins, including OmpA, EspP, Ag43 and FadL. TamA is sufficient to catalyze a low level of outer membrane protein (OMP) assembly, but both TamA and TamB are required for efficient OMP assembly. TamB may regulate TamA activity. It could regulate conformational changes in TamA to drive its function in OMP assembly. It could also act as a chaperone that facilitate the transport of nascent membrane proteins across the periplasm to TamA in the outer membrane. In addition, is involved in outer membrane lipid homeostasis. Likely transports phospholipids between the inner membrane and the outer membrane. It would provide a bridge-like structure that protects phospholipids as they travel across the periplasm. One possible explanation for the apparent dual function of TAM is that TamB is a somewhat generic transporter of hydrophobic molecules. Its function is as follows. TamB, YdbH and YhdP are redundant, but not equivalent, in performing an essential function for growth and maintaining lipid homeostasis in the outer membrane. The transport functions of TamB and YhdP could be differentiated according to the fatty acid saturation state of the phospholipids, with TamB transporting more unsaturated phospholipids and YhdP more saturated phospholipids. Any of these three proteins is sufficient for growth. This chain is Translocation and assembly module subunit TamB, found in Escherichia coli (strain K12).